The sequence spans 541 residues: Protein VAPYRIN (541 aa).

One can recognise an MSP domain in the interval 4 to 138 (LIKLDPSNIV…IDSAIKVMFV (135 aa)). 10 ANK repeats span residues 176 to 205 (QGQTLLHLAISKTRPDLVQLILEFKPDIEA), 209 to 238 (VGSTPLEAASSSGESLIVELLLAHKANTEG), 242 to 271 (SVFRPIHHASREGHMEILRLLLLKGARVDS), 275 to 304 (DGNTSLHLAVEEKRRDCARLLLANGARTDV), 309 to 338 (EGDTPLHIAAANGDENMVKLLLHKGATKYV), 342 to 372 (LGKTAFDVAAENGHSRLFDALRLGDNLCAAA), 374 to 392 (KGEVRTIQKVLESGGVING), 396 to 425 (NGWTSLHRAAFKGRMDAVRFLVEKGIDLDA), 429 to 458 (DGYTALHCAAESGHADVTEFLVKKGADVEA), and 462 to 491 (KGVSALQIVESLNYVGITRILVNGGASREG).

Interacts with EX70I at the periarbuscular membrane (PAM) around the arbuscule hyphal tips. In terms of tissue distribution, expressed in roots.

Its subcellular location is the cytoplasm. The protein localises to the nucleus. It is found in the cell membrane. Required for arbuscular mycorrhizal (AM) symbiosis with AM fungi (e.g. Glomus versiforme and Gigaspora gigantea) both during fungal passage across root epidermis and for arbuscule formation in cortical cells; this symbiosis promotes phosphorus (P) and copper (Cu) uptake. Essential for infection by symbiotic nitrogen-fixing rhizobial bacteria (e.g. Sinorhizobium meliloti) leading to the formation of root nodules. The sequence is that of Protein VAPYRIN from Medicago truncatula (Barrel medic).